Consider the following 529-residue polypeptide: All-trans-zeta-carotene desaturase (529 aa).

Ile12–Gly45 is an FAD binding site.

This sequence belongs to the carotenoid/retinoid oxidoreductase family. FAD is required as a cofactor.

The enzyme catalyses all-trans-zeta-carotene + 2 A = all-trans-lycopene + 2 AH2. It participates in carotenoid biosynthesis; lycopene biosynthesis. Functionally, dehydrogenates carotenes in the trans conformation: converts all-trans-zeta-carotene into all-trans-lycopene, one of the last dehydrogenation steps of lycopene biosynthesis. The chain is All-trans-zeta-carotene desaturase (carC) from Myxococcus xanthus.